Consider the following 216-residue polypeptide: MPIQVVSADFDKTATRPEEWPRGATPEIAFVGRSNVGKSSMLNALARRKGLARVSSTPGRTRALQFFDLSYRPTPAARPRAIRFCDLPGYGYAKVSRAERDRWTAMIEDYLRDRDVLRAVVLIVDARHAPSESDEDAAAFLVSAGRRLVVAATKTDKLPKARRVLALQQVERALGLARGDAVPFSAVEGTGTDALWARLAALAAEEARTAEADPPA.

Residues 24–205 form the EngB-type G domain; it reads ATPEIAFVGR…WARLAALAAE (182 aa). GTP is bound by residues 32–39, 59–63, 86–89, 153–156, and 184–186; these read GRSNVGKS, GRTRA, DLPG, TKTD, and FSA. 2 residues coordinate Mg(2+): Ser-39 and Thr-61.

This sequence belongs to the TRAFAC class TrmE-Era-EngA-EngB-Septin-like GTPase superfamily. EngB GTPase family. Mg(2+) is required as a cofactor.

Necessary for normal cell division and for the maintenance of normal septation. This Anaeromyxobacter dehalogenans (strain 2CP-C) protein is Probable GTP-binding protein EngB.